A 707-amino-acid polypeptide reads, in one-letter code: Nucleolin (707 aa).

The segment at 1-308 is disordered; the sequence is MVKLAKAGKT…KVEGSEPTTP (308 aa). N6-acetyllysine occurs at positions 9, 15, and 16. Residues 24–46 are compositionally biased toward acidic residues; the sequence is VEEDSEDEEMSEDEDDSSGEEEV. Residues Ser-28, Ser-34, Ser-40, and Ser-41 each carry the phosphoserine modification. Low complexity predominate over residues 56–92; it reads ATTTPAKKVVVSQTKKAAVPTPAKKAAVTPGKKAVAT. Copy 1 of the repeat occupies 58 to 65; it reads TTPAKKVV. Residues 58–135 form an 8 X 8 AA tandem repeats of X-T-P-X-K-K-X-X region; that stretch reads TTPAKKVVVS…GAATPAKGAK (78 aa). The residue at position 67 (Ser-67) is a Phosphoserine. A phosphothreonine mark is found at Thr-69, Thr-76, Thr-84, and Thr-92. A run of 3 repeats spans residues 75 to 82, 83 to 90, and 91 to 98. Lys-96 carries the N6-acetyllysine modification. The residue at position 99 (Thr-99) is a Phosphothreonine. The 5; truncated repeat unit spans residues 99-104; that stretch reads TPAKVI. Lys-102 is modified (N6-acetyllysine). Residues 105 to 112 form repeat 6; sequence PTPGKKGA. Position 106 is a phosphothreonine (Thr-106). 2 positions are modified to N6-acetyllysine: Lys-109 and Lys-116. Tandem repeats lie at residues 120-127 and 128-135. Thr-121 carries the phosphothreonine modification. Residues 121-137 show a composition bias toward low complexity; it reads TPGKKGAATPAKGAKNG. Lys-124 is subject to N6-acetyllysine. Phosphoserine occurs at positions 145 and 157. A compositionally biased stretch (acidic residues) spans 145–170; that stretch reads SDEDEDEEDEDDSDEDEDDEEEDEFE. Residues 179-188 are compositionally biased toward low complexity; it reads PAKAAPAAPA. Ser-189 and Ser-212 each carry phosphoserine. The span at 189-217 shows a compositional bias: acidic residues; that stretch reads SEDEEDDEDEDDEEDDDEEEEDDSEEEVM. Thr-220 is modified (phosphothreonine). Acidic residues predominate over residues 241 to 273; the sequence is EEEDDEEEDEDDEDEDDEEEDDEDDDEEEEEEE. Residues 286–302 are compositionally biased toward basic and acidic residues; that stretch reads MTKQKEAPEAKKQKVEG. Residue Lys-299 forms a Glycyl lysine isopeptide (Lys-Gly) (interchain with G-Cter in SUMO1); alternate linkage. Lys-299 participates in a covalent cross-link: Glycyl lysine isopeptide (Lys-Gly) (interchain with G-Cter in SUMO2); alternate. Position 303 is a phosphoserine (Ser-303). 2 RRM domains span residues 309–385 and 395–468; these read FNLF…KPKG and RTLL…YTGE. Lys-320 is subject to N6-acetyllysine. Residue Lys-326 forms a Glycyl lysine isopeptide (Lys-Gly) (interchain with G-Cter in SUMO1); alternate linkage. Lys-326 participates in a covalent cross-link: Glycyl lysine isopeptide (Lys-Gly) (interchain with G-Cter in SUMO2); alternate. Lys-350 is modified (N6-acetyllysine). A Phosphoserine modification is found at Ser-358. Thr-369 bears the Phosphothreonine mark. Lys-372 is covalently cross-linked (Glycyl lysine isopeptide (Lys-Gly) (interchain with G-Cter in SUMO2)). Residue Lys-379 forms a Glycyl lysine isopeptide (Lys-Gly) (interchain with G-Cter in SUMO2); alternate linkage. Lys-379 bears the N6-acetyllysine; alternate mark. Lys-400 is modified (N6-acetyllysine). Phosphoserine is present on Ser-403. Thr-407 carries the post-translational modification Phosphothreonine. N6-acetyllysine occurs at positions 429 and 446. Ser-460 and Ser-462 each carry phosphoserine. 2 positions are modified to N6-acetyllysine: Lys-469 and Lys-478. 2 RRM domains span residues 487–561 and 569–644; these read KTLV…LQGS and KTLF…WAKP. Lys-514 participates in a covalent cross-link: Glycyl lysine isopeptide (Lys-Gly) (interchain with G-Cter in SUMO2); alternate. At Lys-514 the chain carries N6-acetyllysine; alternate. 2 positions are modified to N6-acetyllysine: Lys-522 and Lys-569. Lys-574 participates in a covalent cross-link: Glycyl lysine isopeptide (Lys-Gly) (interchain with G-Cter in SUMO2); alternate. Lys-574 is subject to N6-acetyllysine; alternate. Position 577 is a phosphoserine (Ser-577). A Glycyl lysine isopeptide (Lys-Gly) (interchain with G-Cter in SUMO1); alternate cross-link involves residue Lys-586. A Glycyl lysine isopeptide (Lys-Gly) (interchain with G-Cter in SUMO2); alternate cross-link involves residue Lys-586. Phosphoserine occurs at positions 588 and 616. Residue Lys-621 forms a Glycyl lysine isopeptide (Lys-Gly) (interchain with G-Cter in SUMO2) linkage. Positions 639-707 are disordered; sequence LDWAKPKGEG…KPQGKKTKFE (69 aa). Lys-643 carries the post-translational modification N6-acetyllysine. The segment covering 647-696 has biased composition (gly residues); it reads EGGFGGRGGGRGGFGGRGGGRGGRGGFGGRGRGGFGGRGGFRGGRGGGGD. Asymmetric dimethylarginine occurs at positions 653, 657, 663, 667, 670, 676, 678, 684, and 688. Asymmetric dimethylarginine; alternate is present on Arg-691. Arg-691 carries the omega-N-methylarginine; alternate modification.

In terms of assembly, identified in a IGF2BP1-dependent mRNP granule complex containing untranslated mRNAs. Component of the SWAP complex that consists of NPM1, NCL/nucleolin, PARP1 and SWAP70. Component of a complex which is at least composed of HTATSF1/Tat-SF1, the P-TEFb complex components CDK9 and CCNT1, RNA polymerase II, SUPT5H, and NCL/nucleolin. Interacts with AICDA. Interacts with APTX. Interacts with C1QBP. Interacts with ERBB4. Interacts (via C-terminus) with FMR1 isoform 6 (via N-terminus). Interacts with GZF1; this interaction is important for nucleolar localization of GZF1. Interacts with NSUN2. Interacts with NVL. Interacts (via N-terminus domain) with SETX. Interacts (via RRM1 and C-terminal RRM4/Arg/Gly-rich domains) with TERT; the interaction is important for nucleolar localization of TERT. Interacts with WDR46. Interacts with ZFP36. Interacts with LRRC34. Interacts with RRP1B. Interacts with HNRNPU; this interaction occurs during mitosis. Interacts with RIOK1; RIOK1 recruits NCL to PRMT5 for symmetrically methylation. Interacts with ZBTB7B. Interacts with MDK; this interaction promotes NCL clustering and lateral movements of this complex into lipid rafts leading to MDK internalization. Interacts with HDGF. Interacts with ALKBH2. Interacts with IGFBP5; this interaction is necessary for IGFBP5 localization to the nucleus. Interacts with DDX24 (when ubiquitinated); this interaction may be important during ribosome biogenesis. In terms of processing, some glutamate residues are glycylated by TTLL8. This modification occurs exclusively on glutamate residues and results in a glycine chain on the gamma-carboxyl group. Post-translationally, symmetrically methylated by PRMT5. Expressed in B-cells that have been induced to switch to various Ig isotypes.

The protein localises to the nucleus. Its subcellular location is the nucleolus. It is found in the cytoplasm. In terms of biological role, nucleolin is the major nucleolar protein of growing eukaryotic cells. It is found associated with intranucleolar chromatin and pre-ribosomal particles. It induces chromatin decondensation by binding to histone H1. It is thought to play a role in pre-rRNA transcription and ribosome assembly. May play a role in the process of transcriptional elongation. Binds RNA oligonucleotides with 5'-UUAGGG-3' repeats more tightly than the telomeric single-stranded DNA 5'-TTAGGG-3' repeats. The sequence is that of Nucleolin (Ncl) from Mus musculus (Mouse).